We begin with the raw amino-acid sequence, 369 residues long: Choline-phosphate cytidylyltransferase B (369 aa).

A disordered region spans residues 1 to 27; the sequence is MPVVTTDAESETGIPKSLSNEPPSETM. Residues isoleucine 84, phenylalanine 85, histidine 92, and lysine 122 each coordinate CTP. Phosphocholine contacts are provided by lysine 122 and tryptophan 151. The CTP site is built by histidine 168, aspartate 169, tyrosine 173, glutamine 195, arginine 196, threonine 197, and isoleucine 200. The tract at residues 309–369 is disordered; it reads RMLQALSPKQ…SMSEGDEDEK (61 aa). Residues serine 315, serine 319, serine 322, serine 323, serine 329, serine 331, and serine 335 each carry the phosphoserine modification. Residues 319–339 are compositionally biased toward low complexity; that stretch reads SPVSSPTRSRSPSRSPSPTFS. The residue at position 345 (threonine 345) is a Phosphothreonine. 6 positions are modified to phosphoserine: serine 346, serine 349, serine 350, serine 355, serine 360, and serine 362. The segment covering 351-362 has biased composition (low complexity); the sequence is PKAASASISSMS.

This sequence belongs to the cytidylyltransferase family. In terms of assembly, homodimer. Post-translationally, phosphorylated. In terms of processing, extensively phosphorylated. Highly expressed in testis, placenta, brain, ovary, liver and fetal lung. In terms of tissue distribution, expressed in brain, liver and fetal lung.

Its subcellular location is the cytoplasm. It is found in the endoplasmic reticulum. The enzyme catalyses phosphocholine + CTP + H(+) = CDP-choline + diphosphate. It functions in the pathway phospholipid metabolism; phosphatidylcholine biosynthesis; phosphatidylcholine from phosphocholine: step 1/2. Functionally, catalyzes the key rate-limiting step in the CDP-choline pathway for phosphatidylcholine biosynthesis. This chain is Choline-phosphate cytidylyltransferase B (PCYT1B), found in Homo sapiens (Human).